The primary structure comprises 161 residues: Large ribosomal subunit protein bL9 (161 aa).

This sequence belongs to the bacterial ribosomal protein bL9 family.

Binds to the 23S rRNA. The protein is Large ribosomal subunit protein bL9 of Protochlamydia amoebophila (strain UWE25).